Reading from the N-terminus, the 162-residue chain is Endoribonuclease YbeY (162 aa).

Residues His127, His131, and His137 each contribute to the Zn(2+) site.

Belongs to the endoribonuclease YbeY family. The cofactor is Zn(2+).

The protein resides in the cytoplasm. Single strand-specific metallo-endoribonuclease involved in late-stage 70S ribosome quality control and in maturation of the 3' terminus of the 16S rRNA. This Acetivibrio thermocellus (strain ATCC 27405 / DSM 1237 / JCM 9322 / NBRC 103400 / NCIMB 10682 / NRRL B-4536 / VPI 7372) (Clostridium thermocellum) protein is Endoribonuclease YbeY.